The chain runs to 370 residues: Putative F-box protein At1g47390 (370 aa).

One can recognise an F-box domain in the interval 1–47 (MAPEEKLPCELIEEILSRVPPESLVRFRTVSKKWNALFDDKMFINNH).

The protein is Putative F-box protein At1g47390 of Arabidopsis thaliana (Mouse-ear cress).